Here is a 503-residue protein sequence, read N- to C-terminus: MGGEVRVLLLLGLLHWVGGSEGRKTWRRRGQQPPQPPPPPPLPQRAEVEPGAGQPVESFPLDFTAVEGNMDSFMAQVKSLAQSLYPCSAQQLNEDLRLHLLLNTSVTCNDGSPAGYYLKESKGSRRWLLFLEGGWYCFNRENCDSRYSTMRRLMSSKDWPHTRTGTGILSSQPEENPHWWNANMVFIPYCSSDVWSGASPKSDKNEYAFMGSLIIQEVVRELLGKGLSGAKVLLLAGSSAGGTGVLLNVDRVAELLEELGYPSIQVRGLADSGWFLDNKQYRRSDCIDTINCAPTDAIRRGIRYWSGMVPERCQRQFKEGEEWNCFFGYKVYPTLRCPVFVVQWLFDEAQLTVDNVHLTGQPVQEGQWLYIQNLGRELRGTLKDVQASFAPACLSHEIIIRSYWTDVQVKGTSLPRALHCWDRSFHDSHKASKTPMKGCPFHLVDSCPWPHCNPSCPTIRDQFTGQEMNVAQFLMHMGFDVQTVAQQQGMEPSKLLGMLSNGN.

Positions 1–19 (MGGEVRVLLLLGLLHWVGG) are cleaved as a signal peptide. The interval 23–53 (RKTWRRRGQQPPQPPPPPPLPQRAEVEPGAG) is disordered. Residues 33 to 43 (PPQPPPPPPLP) show a composition bias toward pro residues. Residue Ser88 is modified to Phosphoserine. Asn103 carries an N-linked (GlcNAc...) asparagine glycan. Residues Ser239, Asp347, and His396 each act as charge relay system in the active site.

It belongs to the pectinacetylesterase family. Notum subfamily. As to expression, widely expressed. Expressed in lung, ovary, kidney, liver and brain. Not detected in thymus, heart, spleen, stomach, skeletal muscle and bone marrow.

It localises to the secreted. It catalyses the reaction [Wnt protein]-O-(9Z)-hexadecenoyl-L-serine + H2O = [Wnt protein]-L-serine + (9Z)-hexadecenoate + H(+). In terms of biological role, carboxylesterase that acts as a key negative regulator of the Wnt signaling pathway by specifically mediating depalmitoleoylation of WNT proteins. Serine palmitoleoylation of WNT proteins is required for efficient binding to frizzled receptors. The protein is Palmitoleoyl-protein carboxylesterase NOTUM of Mus musculus (Mouse).